The chain runs to 132 residues: Spermatogenesis-associated protein 33 (132 aa).

The interaction with ATG16L1 stretch occupies residues 1–60 (MGQSKSKPREKKEEEKSTTTLVTKSKEKVMEKEAKQSDKESQPAESLLFATSKHSRPSSS). The segment at 1-81 (MGQSKSKPRE…SKKRSVIPQI (81 aa)) is disordered. Residues 24 to 42 (KSKEKVMEKEAKQSDKESQ) show a composition bias toward basic and acidic residues. The interval 61 to 132 (SEDKPETKQR…IAAYDVHNTE (72 aa)) is interaction with VDAC2. The PQIIIT motif lies at 79 to 84 (PQIIIT). Residue Ser-87 is modified to Phosphoserine. The tract at residues 110 to 132 (DWGPYHRHRSPSTIAAYDVHNTE) is disordered.

As to quaternary structure, interacts (via PQIIIT motif) with PPP3R2 and PPP3CC. Interacts with VDAC2. Interacts with ATG16L1 (via WD repeats). Interacts with PPP3R1, PPP3CA and PPP3CB. Predominantly expressed in the testis (at protein level). Expressed in the sperm midpiece (at protein level).

The protein localises to the cytoplasm. It localises to the cytosol. It is found in the nucleus. The protein resides in the mitochondrion. In terms of biological role, plays an important role in sperm motility and male fertility. Required for sperm midpiece flexibility and for the localization of sperm calcineurin to the mitochondria. Promotes mitophagy as well as acts as an autophagy mediator in male germline cells. Links damaged mitochondria to autophagosomes via its binding to the outer mitochondrial membrane protein VDAC2, as well as to key autophagy machinery component ATG16L1. The chain is Spermatogenesis-associated protein 33 (Spata33) from Mus musculus (Mouse).